A 34-amino-acid chain; its full sequence is MINWQVIAQLVSLGVIVLVGPAVIILLSLKRGNL.

Residues 6–26 (VIAQLVSLGVIVLVGPAVIIL) form a helical membrane-spanning segment.

This sequence belongs to the Psb30/Ycf12 family. In terms of assembly, PSII is composed of 1 copy each of membrane proteins PsbA, PsbB, PsbC, PsbD, PsbE, PsbF, PsbH, PsbI, PsbJ, PsbK, PsbL, PsbM, PsbT, PsbX, PsbY, PsbZ, Psb30/Ycf12, peripheral proteins of the oxygen-evolving complex and a large number of cofactors. It forms dimeric complexes.

Its subcellular location is the plastid. It localises to the chloroplast thylakoid membrane. Its function is as follows. A core subunit of photosystem II (PSII), probably helps stabilize the reaction center. This is Photosystem II reaction center protein Psb30 from Pyropia yezoensis (Susabi-nori).